A 623-amino-acid polypeptide reads, in one-letter code: Protein FAM234B (623 aa).

A disordered region spans residues 1–82 (MATVLSRALK…TSERAPEGYP (82 aa)). The chain crosses the membrane as a helical span at residues 104 to 124 (AVFLLTVVISMILVLVCAFLI).

Belongs to the FAM234 family.

It localises to the membrane. The protein resides in the golgi outpost. Its subcellular location is the cytoplasm. It is found in the cytoskeleton. The protein localises to the microtubule organizing center. This chain is Protein FAM234B (FAM234B), found in Gallus gallus (Chicken).